The chain runs to 384 residues: Chorismate synthase (384 aa).

NADP(+) contacts are provided by Arg-40 and Arg-46. FMN contacts are provided by residues 128–130, Gly-292, 307–311, and Arg-333; these read RAS and KPIPT.

It belongs to the chorismate synthase family. As to quaternary structure, homotetramer. FMNH2 is required as a cofactor.

It catalyses the reaction 5-O-(1-carboxyvinyl)-3-phosphoshikimate = chorismate + phosphate. It participates in metabolic intermediate biosynthesis; chorismate biosynthesis; chorismate from D-erythrose 4-phosphate and phosphoenolpyruvate: step 7/7. Functionally, catalyzes the anti-1,4-elimination of the C-3 phosphate and the C-6 proR hydrogen from 5-enolpyruvylshikimate-3-phosphate (EPSP) to yield chorismate, which is the branch point compound that serves as the starting substrate for the three terminal pathways of aromatic amino acid biosynthesis. This reaction introduces a second double bond into the aromatic ring system. The chain is Chorismate synthase from Carboxydothermus hydrogenoformans (strain ATCC BAA-161 / DSM 6008 / Z-2901).